Consider the following 314-residue polypeptide: Olfactory receptor 52K2 (314 aa).

At 1-27 (MSASNITLTHPTAFLLVGIPGLEHLHI) the chain is on the extracellular side. An N-linked (GlcNAc...) asparagine glycan is attached at Asn-5. The helical transmembrane segment at 28–48 (WISIPFCLAYTLALLGNCTLL) threads the bilayer. At 49 to 56 (LIIQADAA) the chain is on the cytoplasmic side. Residues 57–77 (LHEPMYLFLAMLAAIDLVLSS) traverse the membrane as a helical segment. The Extracellular segment spans residues 78 to 101 (SALPKMLAIFWFRDREINFFACLA). Cys-99 and Cys-191 are joined by a disulfide. The chain crosses the membrane as a helical span at residues 102-122 (QMFFLHSFSIMESAVLLAMAF). At 123 to 141 (DRYVAICKPLHYTKVLTGS) the chain is on the cytoplasmic side. A helical transmembrane segment spans residues 142–162 (LITKIGMAAVARAVTLMTPLP). Topologically, residues 163-198 (FLLRCFHYCRGPVIAHCYCEHMAVVRLACGDTSFNN) are extracellular. The chain crosses the membrane as a helical span at residues 199 to 219 (IYGIAVAMFIVVLDLLLVILS). The Cytoplasmic portion of the chain corresponds to 220-239 (YIFILQAVLLLASQEARYKA). A helical transmembrane segment spans residues 240–260 (FGTCVSHIGAILAFYTTVVIS). The Extracellular segment spans residues 261 to 275 (SVMHRVARHAAPHVH). A helical membrane pass occupies residues 276–296 (ILLANFYLLFPPMVNPIIYGV). Over 297 to 314 (KTKQIRESILGVFPRKDM) the chain is Cytoplasmic.

This sequence belongs to the G-protein coupled receptor 1 family.

The protein resides in the cell membrane. Functionally, odorant receptor. The protein is Olfactory receptor 52K2 (OR52K2) of Homo sapiens (Human).